The sequence spans 151 residues: Proline-rich acidic protein 1 (151 aa).

Residues 1–20 form the signal peptide; that stretch reads MRRLLLVTSLVVVLLWEAGA. A disordered region spans residues 71-151; it reads LTTEEKPRGQ…EDQDHIYHPQ (81 aa).

As to quaternary structure, interacts with isoform 1 and isoform 3 of MAD1L1. Interacts with MTTP. In terms of tissue distribution, highly expressed in the intestinal epithelial cells (at protein level). Abundantly expressed in the epithelial cells of the liver, kidney and cervix. Significantly down-regulated in hepatocellular carcinoma and right colon adenocarcinoma compared with the respective adjacent normal tissues. Expressed in epididymis (at protein level).

The protein resides in the secreted. It localises to the endoplasmic reticulum. Lipid-binding protein which promotes lipid absorption by facilitating MTTP-mediated lipid transfer (mainly triglycerides and phospholipids) and MTTP-mediated apoB lipoprotein assembly and secretion. Protects the gastrointestinal epithelium from irradiation-induced apoptosis. May play an important role in maintaining normal growth homeostasis in epithelial cells. Involved in p53/TP53-dependent cell survival after DNA damage. May down-regulate the expression of MAD1L1 and exert a suppressive role in mitotic spindle assembly checkpoint in hepatocellular carcinomas. The polypeptide is Proline-rich acidic protein 1 (PRAP1) (Homo sapiens (Human)).